We begin with the raw amino-acid sequence, 251 residues long: ATP synthase subunit a (251 aa).

Helical transmembrane passes span 29–49, 56–73, 87–107, 117–137, 159–181, 192–212, and 218–238; these read FTQSALYMFAAVGIIALITLV, LVPGRMQSLAEAFYEFIA, FVPLVFSLFMFVLVLNLFGMI, IIVTFMLALVVILTVVIYGFM, LIVAIEVVSFISRPISLSVRLFA, IFAGFVPALLAAGIWGILSPL, and VAITALEMLVAVLQAYVFATL.

This sequence belongs to the ATPase A chain family. In terms of assembly, F-type ATPases have 2 components, CF(1) - the catalytic core - and CF(0) - the membrane proton channel. CF(1) has five subunits: alpha(3), beta(3), gamma(1), delta(1), epsilon(1). CF(0) has three main subunits: a(1), b(2) and c(9-12). The alpha and beta chains form an alternating ring which encloses part of the gamma chain. CF(1) is attached to CF(0) by a central stalk formed by the gamma and epsilon chains, while a peripheral stalk is formed by the delta and b chains.

The protein localises to the cell inner membrane. Key component of the proton channel; it plays a direct role in the translocation of protons across the membrane. This chain is ATP synthase subunit a, found in Methylobacterium sp. (strain 4-46).